The sequence spans 360 residues: Photosystem II protein D1 (360 aa).

3 helical membrane passes run 30–47 (YVGWFGVLMIPCLLAAAA), 119–134 (HFLIGISAYMGRQWEL), and 143–157 (WICVAYSAPVSAAFA). H119 lines the chlorophyll a pocket. Pheophytin a is bound at residue Y127. Positions 171 and 190 each coordinate [CaMn4O5] cluster. The chain crosses the membrane as a helical span at residues 198–219 (FHMAGVAGMFGGSLFSAMHGSL). H199 contributes to the chlorophyll a binding site. A quinone-binding positions include H216 and 265 to 266 (SF). H216 lines the Fe cation pocket. A Fe cation-binding site is contributed by H273. The helical transmembrane segment at 275 to 289 (FLAVFPVVCVWLTSM) threads the bilayer. Positions 333, 334, 343, and 345 each coordinate [CaMn4O5] cluster. Positions 346–360 (AAESTTVALSAPAIG) are excised as a propeptide.

The protein belongs to the reaction center PufL/M/PsbA/D family. In terms of assembly, PSII is composed of 1 copy each of membrane proteins PsbA, PsbB, PsbC, PsbD, PsbE, PsbF, PsbH, PsbI, PsbJ, PsbK, PsbL, PsbM, PsbT, PsbX, PsbY, Psb30/Ycf12, peripheral proteins PsbO, CyanoQ (PsbQ), PsbU, PsbV and a large number of cofactors. It forms dimeric complexes. The D1/D2 heterodimer binds P680, chlorophylls that are the primary electron donor of PSII, and subsequent electron acceptors. It shares a non-heme iron and each subunit binds pheophytin, quinone, additional chlorophylls, carotenoids and lipids. D1 provides most of the ligands for the Mn4-Ca-O5 cluster of the oxygen-evolving complex (OEC). There is also a Cl(-1) ion associated with D1 and D2, which is required for oxygen evolution. The PSII complex binds additional chlorophylls, carotenoids and specific lipids. serves as cofactor. Tyr-162 forms a radical intermediate that is referred to as redox-active TyrZ, YZ or Y-Z. In terms of processing, C-terminally processed by CtpA; processing is essential to allow assembly of the oxygen-evolving complex and thus photosynthetic growth.

It localises to the cellular thylakoid membrane. It carries out the reaction 2 a plastoquinone + 4 hnu + 2 H2O = 2 a plastoquinol + O2. Its function is as follows. Photosystem II (PSII) is a light-driven water:plastoquinone oxidoreductase that uses light energy to abstract electrons from H(2)O, generating O(2) and a proton gradient subsequently used for ATP formation. It consists of a core antenna complex that captures photons, and an electron transfer chain that converts photonic excitation into a charge separation. The D1/D2 (PsbA/PsbD) reaction center heterodimer binds P680, the primary electron donor of PSII as well as several subsequent electron acceptors. The chain is Photosystem II protein D1 from Prochlorococcus marinus (strain MIT 9312).